We begin with the raw amino-acid sequence, 182 residues long: Ribosome maturation factor RimM (182 aa).

The PRC barrel domain maps to 103 to 182 (VGDYYWKDLI…TIEVDWDPGF (80 aa)).

Belongs to the RimM family. As to quaternary structure, binds ribosomal protein uS19.

The protein resides in the cytoplasm. An accessory protein needed during the final step in the assembly of 30S ribosomal subunit, possibly for assembly of the head region. Essential for efficient processing of 16S rRNA. May be needed both before and after RbfA during the maturation of 16S rRNA. It has affinity for free ribosomal 30S subunits but not for 70S ribosomes. The chain is Ribosome maturation factor RimM from Pectobacterium atrosepticum (strain SCRI 1043 / ATCC BAA-672) (Erwinia carotovora subsp. atroseptica).